Here is a 339-residue protein sequence, read N- to C-terminus: Fructose-1,6-bisphosphatase isozyme 2 (339 aa).

The important for interaction with ALDOA stretch occupies residues 3-10 (DRSPFETD). AMP is bound by residues V18 and 28–32 (TGELT). Mg(2+)-binding residues include D69 and E98. AMP is bound at residue 113 to 114 (KY). Positions 119, 121, and 122 each coordinate Mg(2+). D122 lines the substrate pocket. R141 provides a ligand contact to AMP. A Nuclear localization signal motif is present at residues 204-208 (KKKGK). 213–216 (NEGY) is a substrate binding site. A phosphotyrosine mark is found at Y216 and Y219. Substrate contacts are provided by residues 245–249 (YVGSM), Y265, and K275. Position 281 (E281) interacts with Mg(2+).

It belongs to the FBPase class 1 family. Homotetramer. Interacts with ALDOA; the interaction blocks inhibition by physiological concentrations of AMP and reduces inhibition by Ca(2+). Interacts with alpha-actinin and F-actin. It depends on Mg(2+) as a cofactor. Expressed in muscle, intestine, brain and placenta and very weakly in liver.

The protein localises to the cell junction. It localises to the cytoplasm. It is found in the nucleus. The protein resides in the myofibril. Its subcellular location is the sarcomere. The protein localises to the z line. It carries out the reaction beta-D-fructose 1,6-bisphosphate + H2O = beta-D-fructose 6-phosphate + phosphate. Its pathway is carbohydrate biosynthesis; gluconeogenesis. Subject to complex allosteric regulation. The enzyme can assume an active R-state, or an inactive T-state. Intermediate conformations may exist. AMP acts as an allosteric inhibitor. Fructose 2,6-bisphosphate acts as a competitive inhibitor. Strongly inhibited by Ca(2+). Catalyzes the hydrolysis of fructose 1,6-bisphosphate to fructose 6-phosphate in the presence of divalent cations and probably participates in glycogen synthesis from carbohydrate precursors, such as lactate. This Mus musculus (Mouse) protein is Fructose-1,6-bisphosphatase isozyme 2 (Fbp2).